The sequence spans 381 residues: Protein RecA (381 aa).

An ATP-binding site is contributed by 79 to 86 (GPESSGKT).

Belongs to the RecA family.

The protein resides in the cytoplasm. In terms of biological role, can catalyze the hydrolysis of ATP in the presence of single-stranded DNA, the ATP-dependent uptake of single-stranded DNA by duplex DNA, and the ATP-dependent hybridization of homologous single-stranded DNAs. It interacts with LexA causing its activation and leading to its autocatalytic cleavage. The chain is Protein RecA from Streptococcus parasanguinis.